Consider the following 1287-residue polypeptide: FYVE zinc finger domain protein UPA1 (1287 aa).

Residues 1–298 are disordered; sequence MTIPDPANII…SSTSLSAPAE (298 aa). Residues 86-99 show a composition bias toward low complexity; the sequence is DSSSFGSKPSSSAS. Residues 115-136 show a composition bias toward polar residues; that stretch reads WATSSTTSHPSKASQSTLSPNA. Residues 128 to 144 carry the PAM2 motif; that stretch reads SQSTLSPNASVFKPSRS. Composition is skewed to basic and acidic residues over residues 177–187 and 201–211; these read RPDHAPLDHEQ and KVEEQRGDHSI. Residues 212–235 show a composition bias toward polar residues; sequence PHQNGLVSAQAQTASDAVSTSKYT. The PAM2L 1 motif lies at 239 to 253; the sequence is ADQEEDQDDFVYPGA. Over residues 255-294 the composition is skewed to polar residues; it reads SPSSGQAAVQDEQQAVTDSQTTKSLTKQESDPEASSTSLS. ANK repeat units lie at residues 366-395, 400-429, 433-463, and 468-497; these read NGLV…AIVE, EGET…DANA, DGWT…QIDV, and GAWT…ADPF. 4 disordered regions span residues 582–630, 643–697, 934–960, and 977–1005; these read NGGK…VGLP, RVGP…ASAQ, REAA…YPNS, and TSGT…APSE. Residues 674 to 695 show a composition bias toward polar residues; that stretch reads STPTPESVLQARRGTSSVNGAS. A compositionally biased stretch (acidic residues) spans 938–955; the sequence is GLDEDEDEDAADDDDDEF. The PAM2L 2 motif lies at 941–960; that stretch reads EDEDEDAADDDDDEFIYPNS. Positions 981–995 are enriched in low complexity; that stretch reads LSRPSLSQRQSSAAS. The FYVE-type zinc finger occupies 1055 to 1129; the sequence is DEEAKDCIGC…VCNGCHAELQ (75 aa). Zn(2+)-binding residues include C1061, C1064, C1077, C1080, C1085, C1088, C1121, and C1124. Residues 1243–1283 form an RING-type; atypical zinc finger; that stretch reads CSICMEDFVANSTIARLPCLCYFHRGCIDSWFKRGRECPVH.

The protein belongs to the UPA1 PAM2 domain-binding protein family. As to quaternary structure, part of large ribonucleoprotein complexes (mRNPs) containing RNA-binding proteins RRM4 and PAB1, endosome-binding protein UPA1, core scaffold protein UPA2 and associated factor GRP1. Interacts (via PAM2 motif) with PAB1 (via PABC domain). Interacts (via PAM2L motifs) with RRM4.

The protein resides in the cytoplasm. Its subcellular location is the cytoskeleton. It is found in the endosome. Its function is as follows. FYVE zinc finger domain protein that functions in endosomal targeting and transport of mRNAs, as well as associated ribosomes. The endosomal mRNA transport regulates polarity of the infectious hyphae by transporting a broad spectrum of cargo mRNAs from the nucleus to cell poles. Involved in chitinase CTS1 secretion. Dispensable for general endosomal functions but crucial for endosomal recruitment of RRM4. This chain is FYVE zinc finger domain protein UPA1, found in Mycosarcoma maydis (Corn smut fungus).